Reading from the N-terminus, the 72-residue chain is Translation initiation factor IF-1 (72 aa).

Residues Met-1–Arg-72 form the S1-like domain.

This sequence belongs to the IF-1 family. In terms of assembly, component of the 30S ribosomal translation pre-initiation complex which assembles on the 30S ribosome in the order IF-2 and IF-3, IF-1 and N-formylmethionyl-tRNA(fMet); mRNA recruitment can occur at any time during PIC assembly.

The protein localises to the cytoplasm. In terms of biological role, one of the essential components for the initiation of protein synthesis. Stabilizes the binding of IF-2 and IF-3 on the 30S subunit to which N-formylmethionyl-tRNA(fMet) subsequently binds. Helps modulate mRNA selection, yielding the 30S pre-initiation complex (PIC). Upon addition of the 50S ribosomal subunit IF-1, IF-2 and IF-3 are released leaving the mature 70S translation initiation complex. The sequence is that of Translation initiation factor IF-1 from Wigglesworthia glossinidia brevipalpis.